The following is a 494-amino-acid chain: Serine/threonine-protein kinase PBL13 (494 aa).

The S-palmitoyl cysteine moiety is linked to residue cysteine 4. Threonine 65 carries the phosphothreonine modification. Positions 76–356 constitute a Protein kinase domain; that stretch reads FSSSNFLGEG…STVVSVLQDI (281 aa). ATP is bound by residues 82 to 90 and lysine 111; that span reads LGEGGFGPV. Tyrosine 156 carries the post-translational modification Phosphotyrosine. Residue aspartate 206 is the Proton acceptor of the active site. Position 210 is a phosphoserine (serine 210). Serine 240 is subject to Phosphoserine; by autocatalysis. 2 positions are modified to phosphothreonine: threonine 241 and threonine 246. A Phosphotyrosine modification is found at tyrosine 254. At serine 321 the chain carries Phosphoserine; by autocatalysis. Phosphothreonine; by autocatalysis occurs at positions 323 and 383. Serine 384 carries the post-translational modification Phosphoserine; by autocatalysis. Phosphothreonine; by autocatalysis is present on residues threonine 395, threonine 398, threonine 406, threonine 413, threonine 421, and threonine 428. The residue at position 429 (serine 429) is a Phosphoserine; by autocatalysis. The disordered stretch occupies residues 434–471; that stretch reads DKTRREVKETSLQNFDKPRNVSTTDNHQKFRSPAHTAR. Threonine 443 carries the post-translational modification Phosphothreonine; by autocatalysis. The segment covering 443 to 458 has biased composition (polar residues); the sequence is TSLQNFDKPRNVSTTD. Residues serine 444 and serine 455 each carry the phosphoserine; by autocatalysis modification. At threonine 456 the chain carries Phosphothreonine; by autocatalysis. Basic residues predominate over residues 462 to 471; it reads KFRSPAHTAR. The residue at position 481 (tyrosine 481) is a Phosphotyrosine; by autocatalysis.

The protein belongs to the protein kinase superfamily. Ser/Thr protein kinase family. As to quaternary structure, interacts with RBHOD. Interaction is disrupted by flagellin-induced immune signaling.

The protein localises to the cell membrane. The enzyme catalyses L-seryl-[protein] + ATP = O-phospho-L-seryl-[protein] + ADP + H(+). It carries out the reaction L-threonyl-[protein] + ATP = O-phospho-L-threonyl-[protein] + ADP + H(+). Its function is as follows. Involved in defense responses. Acts as a negative regulator of plant immune responses. The chain is Serine/threonine-protein kinase PBL13 from Arabidopsis thaliana (Mouse-ear cress).